The sequence spans 570 residues: Methionine--tRNA ligase (570 aa).

Positions P11–N21 match the 'HIGH' region motif. Residues C143, C146, C156, and C159 each contribute to the Zn(2+) site. Positions K333–S337 match the 'KMSKS' region motif. K336 is a binding site for ATP.

The protein belongs to the class-I aminoacyl-tRNA synthetase family. MetG type 1 subfamily. Requires Zn(2+) as cofactor.

Its subcellular location is the cytoplasm. It catalyses the reaction tRNA(Met) + L-methionine + ATP = L-methionyl-tRNA(Met) + AMP + diphosphate. Is required not only for elongation of protein synthesis but also for the initiation of all mRNA translation through initiator tRNA(fMet) aminoacylation. The protein is Methionine--tRNA ligase of Pyrobaculum calidifontis (strain DSM 21063 / JCM 11548 / VA1).